Here is a 636-residue protein sequence, read N- to C-terminus: DNA-dependent metalloprotease SPRTN (636 aa).

Positions 19–42 are disordered; the sequence is QETPAAGWPDEDCPSSKRRRVDPS. Residues 76–183 form the SprT-like domain; the sequence is RAMFLQFNDK…ASGTNITIYH (108 aa). H141 lines the Zn(2+) pocket. Residue E142 is part of the active site. Residues H145 and H160 each coordinate Zn(2+). Disordered regions lie at residues 238–382 and 398–430; these read TYTK…GKQR and RGAS…PSGK. The span at 241–268 shows a compositional bias: basic and acidic residues; that stretch reads KIKEPENYGKTGKSDKQRDKMPATEMPK. Positions 272 to 281 are enriched in low complexity; it reads PPSSTSSSGS. An SHP-box motif is present at residues 290 to 298; that stretch reads FSGRGFVLG. The segment covering 302–311 has biased composition (polar residues); that stretch reads QIPTNKQIQS. The span at 313-327 shows a compositional bias: pro residues; that stretch reads PKAPPEPLHSPPDSP. A compositionally biased stretch (polar residues) spans 341 to 374; sequence RLSSGTSNIPRKRSVGNTNAFINVNGSPVRISNG. The span at 399 to 416 shows a compositional bias: low complexity; it reads GASAVGSSKSSTDASTAD. The PIP-box motif lies at 451 to 458; that stretch reads ESNISKYF. The segment at 473 to 608 is disordered; it reads TFGSPQKSAI…VRDQQANNPP (136 aa). Polar residues-rich tracts occupy residues 492 to 523 and 545 to 554; these read FGSN…SGSS and SPRTSGTTPS. The short motif at 535–566 is the Nuclear localization signal element; that stretch reads SNFPSPRNIGSPRTSGTTPSGAKKRSWEEHNS. 2 stretches are compositionally biased toward basic and acidic residues: residues 559–570 and 584–593; these read RSWEEHNSERVF and TDKKREEVRS. Residues 612–636 form a UBZ4-type zinc finger; it reads TVHCPVCHIRLPESTINDHLDSCLL. Zn(2+)-binding residues include C615, C618, H630, and C634.

Belongs to the Spartan family. In terms of assembly, homodimer. The cofactor is Zn(2+). Post-translationally, autocatalytically cleaved in response to double-stranded DNA-binding: autocatalytic cleavage takes place in trans and leads to inactivation.

The protein localises to the nucleus. The protein resides in the chromosome. DNA-binding activates the protease activity: single-stranded DNA-binding specifically activates ability to cleave covalent DNA-protein cross-links (DPCs). In contrast, double-stranded DNA-binding specifically activates autocatalytic cleavage, and subsequent inactivation. In terms of biological role, DNA-dependent metalloendopeptidase that mediates the proteolytic cleavage of covalent DNA-protein cross-links (DPCs) during DNA synthesis, thereby playing a key role in maintaining genomic integrity. DPCs are highly toxic DNA lesions that interfere with essential chromatin transactions, such as replication and transcription, and which are induced by reactive agents, such as UV light or formaldehyde. Associates with the DNA replication machinery and specifically removes DPCs during DNA synthesis. Catalyzes proteolytic cleavage of the hmces DNA-protein cross-link following unfolding by the brip1/fancj helicase. Acts as a pleiotropic protease for DNA-binding proteins cross-linked with DNA, such as top1, top2a, histones H3 and H4. Mediates degradation of DPCs that are not ubiquitinated, while it is not able to degrade ubiquitinated DPCs. SPRTN activation requires polymerase collision with DPCs followed by helicase bypass of DPCs. May also act as a 'reader' of ubiquitinated pcna: facilitates chromatin association of rad18 and is required for efficient pcna monoubiquitination, promoting a feed-forward loop to enhance pcna ubiquitination and translesion DNA synthesis. Acts as a regulator of translesion DNA synthesis by recruiting vcp/p97 to sites of DNA damage. The polypeptide is DNA-dependent metalloprotease SPRTN (Danio rerio (Zebrafish)).